The primary structure comprises 290 residues: Diaminopimelate epimerase (290 aa).

2 residues coordinate substrate: Asn-11 and Asn-78. The Proton donor role is filled by Cys-87. Substrate-binding positions include 88 to 89 (GN), Asn-163, Asn-199, and 217 to 218 (ER). The active-site Proton acceptor is the Cys-226. Residue 227–228 (GT) coordinates substrate.

The protein belongs to the diaminopimelate epimerase family. Homodimer.

The protein localises to the cytoplasm. The catalysed reaction is (2S,6S)-2,6-diaminopimelate = meso-2,6-diaminopimelate. It participates in amino-acid biosynthesis; L-lysine biosynthesis via DAP pathway; DL-2,6-diaminopimelate from LL-2,6-diaminopimelate: step 1/1. In terms of biological role, catalyzes the stereoinversion of LL-2,6-diaminopimelate (L,L-DAP) to meso-diaminopimelate (meso-DAP), a precursor of L-lysine and an essential component of the bacterial peptidoglycan. In Mycobacterium ulcerans (strain Agy99), this protein is Diaminopimelate epimerase.